Here is a 149-residue protein sequence, read N- to C-terminus: Large ribosomal subunit protein eL19 (149 aa).

Residues 45 to 94 form a disordered region; the sequence is VADGTIDAEDTQGNSRGRARERDAKESYGHKKGAGSRKGKAGARQNEKRE. Over residues 62-73 the composition is skewed to basic and acidic residues; sequence RARERDAKESYG. Positions 74–85 are enriched in basic residues; that stretch reads HKKGAGSRKGKA.

This sequence belongs to the eukaryotic ribosomal protein eL19 family. In terms of assembly, part of the 50S ribosomal subunit.

Functionally, binds to the 23S rRNA. This chain is Large ribosomal subunit protein eL19, found in Halobacterium salinarum (strain ATCC 700922 / JCM 11081 / NRC-1) (Halobacterium halobium).